We begin with the raw amino-acid sequence, 662 residues long: Phosphomethylpyrimidine synthase (662 aa).

Substrate is bound by residues N235, M264, Y293, H329, 349–351 (SRG), 390–393 (DGMR), and E429. Zn(2+) is bound at residue H433. Y456 lines the substrate pocket. H497 lines the Zn(2+) pocket. 3 residues coordinate [4Fe-4S] cluster: C577, C580, and C585.

It belongs to the ThiC family. Homodimer. The cofactor is [4Fe-4S] cluster.

It carries out the reaction 5-amino-1-(5-phospho-beta-D-ribosyl)imidazole + S-adenosyl-L-methionine = 4-amino-2-methyl-5-(phosphooxymethyl)pyrimidine + CO + 5'-deoxyadenosine + formate + L-methionine + 3 H(+). It participates in cofactor biosynthesis; thiamine diphosphate biosynthesis. Its function is as follows. Catalyzes the synthesis of the hydroxymethylpyrimidine phosphate (HMP-P) moiety of thiamine from aminoimidazole ribotide (AIR) in a radical S-adenosyl-L-methionine (SAM)-dependent reaction. The polypeptide is Phosphomethylpyrimidine synthase (Shewanella halifaxensis (strain HAW-EB4)).